Reading from the N-terminus, the 366-residue chain is MQILAALSAIGALVATATAAAVPNAPAKQSMIDIQLSATGNTLIKATITNKGDKALNLLQFNTILDKNPTRKVRVYQNGTEVKFTGMLARYKMSNLSPDYFTTLGPKSSVESTFDIARTHDLTRGGKITVMASGTIPTAEGHGNGTSITGYARYESNKLELDVDAKKASSVAQAMGKVNKSRSTIDKRTNIDTSSCSQSQLEALEGALYNSAALAQAAAEAAPQSTDTVAEFFKSTSRNTIKTLVSRFQSVARESTYVNDGRTTYYCTDSMNGCSPGVLAYTLPDQNLIFNCPIYYSDLPPLAQSCYEQDQATTTLHEMTHNSAVVSPFCDDLGYGYDDATSLSASQALQNADSYALFANAIYLGC.

Residues 1–19 form the signal peptide; it reads MQILAALSAIGALVATATA. Residues 20–188 constitute a propeptide that is removed on maturation; the sequence is AAVPNAPAKQ…NKSRSTIDKR (169 aa). 2 cysteine pairs are disulfide-bonded: Cys196/Cys267 and Cys274/Cys292. His317 contacts Zn(2+). Glu318 is a catalytic residue. Positions 321 and 332 each coordinate Zn(2+).

Belongs to the peptidase M35 family. Zn(2+) is required as a cofactor.

It is found in the secreted. It carries out the reaction Preferential cleavage of bonds with hydrophobic residues in P1'. Also 3-Asn-|-Gln-4 and 8-Gly-|-Ser-9 bonds in insulin B chain.. Secreted metalloproteinase that allows assimilation of proteinaceous substrates. Shows high activities on basic nuclear substrates such as histone and protamine. May be involved in virulence. The sequence is that of Neutral protease 2 homolog MGYG_04094 from Arthroderma gypseum (strain ATCC MYA-4604 / CBS 118893) (Microsporum gypseum).